The chain runs to 202 residues: Na(+)-translocating NADH-quinone reductase subunit E (202 aa).

A run of 6 helical transmembrane segments spans residues 5–25 (VSLF…FLGM), 35–55 (VSTA…TVPL), 81–101 (FLGL…LEMF), 114–134 (GVFL…LFMV), 144–164 (LTYG…LAGI), and 180–200 (LGIT…FGGM).

Belongs to the NqrDE/RnfAE family. In terms of assembly, composed of six subunits; NqrA, NqrB, NqrC, NqrD, NqrE and NqrF.

It localises to the cell inner membrane. The catalysed reaction is a ubiquinone + n Na(+)(in) + NADH + H(+) = a ubiquinol + n Na(+)(out) + NAD(+). Its function is as follows. NQR complex catalyzes the reduction of ubiquinone-1 to ubiquinol by two successive reactions, coupled with the transport of Na(+) ions from the cytoplasm to the periplasm. NqrA to NqrE are probably involved in the second step, the conversion of ubisemiquinone to ubiquinol. In Psychrobacter sp. (strain PRwf-1), this protein is Na(+)-translocating NADH-quinone reductase subunit E.